The chain runs to 445 residues: Probable D-serine dehydratase (445 aa).

Residue K111 is modified to N6-(pyridoxal phosphate)lysine.

Belongs to the serine/threonine dehydratase family. DsdA subfamily. The cofactor is pyridoxal 5'-phosphate.

It catalyses the reaction D-serine = pyruvate + NH4(+). The polypeptide is Probable D-serine dehydratase (Burkholderia pseudomallei (strain 1710b)).